A 143-amino-acid chain; its full sequence is Large ribosomal subunit protein uL11 (143 aa).

This sequence belongs to the universal ribosomal protein uL11 family. In terms of assembly, part of the ribosomal stalk of the 50S ribosomal subunit. Interacts with L10 and the large rRNA to form the base of the stalk. L10 forms an elongated spine to which L12 dimers bind in a sequential fashion forming a multimeric L10(L12)X complex. In terms of processing, one or more lysine residues are methylated.

Functionally, forms part of the ribosomal stalk which helps the ribosome interact with GTP-bound translation factors. The sequence is that of Large ribosomal subunit protein uL11 from Paracidovorax citrulli (strain AAC00-1) (Acidovorax citrulli).